Consider the following 443-residue polypeptide: Signal recognition particle 54 kDa protein (443 aa).

GTP is bound by residues 107-114, 189-193, and 247-250; these read GVQGSGKT, DTAGR, and TKLD.

This sequence belongs to the GTP-binding SRP family. SRP54 subfamily. As to quaternary structure, part of the signal recognition particle protein translocation system, which is composed of SRP and FtsY. Archaeal SRP consists of a 7S RNA molecule of 300 nucleotides and two protein subunits: SRP54 and SRP19.

The protein resides in the cytoplasm. The enzyme catalyses GTP + H2O = GDP + phosphate + H(+). Functionally, involved in targeting and insertion of nascent membrane proteins into the cytoplasmic membrane. Binds to the hydrophobic signal sequence of the ribosome-nascent chain (RNC) as it emerges from the ribosomes. The SRP-RNC complex is then targeted to the cytoplasmic membrane where it interacts with the SRP receptor FtsY. This Pyrococcus horikoshii (strain ATCC 700860 / DSM 12428 / JCM 9974 / NBRC 100139 / OT-3) protein is Signal recognition particle 54 kDa protein.